The sequence spans 103 residues: Pyrimidine/purine nucleoside phosphorylase (103 aa).

This sequence belongs to the nucleoside phosphorylase PpnP family.

The catalysed reaction is a purine D-ribonucleoside + phosphate = a purine nucleobase + alpha-D-ribose 1-phosphate. The enzyme catalyses adenosine + phosphate = alpha-D-ribose 1-phosphate + adenine. It catalyses the reaction cytidine + phosphate = cytosine + alpha-D-ribose 1-phosphate. It carries out the reaction guanosine + phosphate = alpha-D-ribose 1-phosphate + guanine. The catalysed reaction is inosine + phosphate = alpha-D-ribose 1-phosphate + hypoxanthine. The enzyme catalyses thymidine + phosphate = 2-deoxy-alpha-D-ribose 1-phosphate + thymine. It catalyses the reaction uridine + phosphate = alpha-D-ribose 1-phosphate + uracil. It carries out the reaction xanthosine + phosphate = alpha-D-ribose 1-phosphate + xanthine. In terms of biological role, catalyzes the phosphorolysis of diverse nucleosides, yielding D-ribose 1-phosphate and the respective free bases. Can use uridine, adenosine, guanosine, cytidine, thymidine, inosine and xanthosine as substrates. Also catalyzes the reverse reactions. The polypeptide is Pyrimidine/purine nucleoside phosphorylase (Shewanella sp. (strain ANA-3)).